The following is a 330-amino-acid chain: Phenylalanine--tRNA ligase alpha subunit (330 aa).

Residue glutamate 246 participates in Mg(2+) binding.

Belongs to the class-II aminoacyl-tRNA synthetase family. Phe-tRNA synthetase alpha subunit type 1 subfamily. As to quaternary structure, tetramer of two alpha and two beta subunits. Mg(2+) is required as a cofactor.

It localises to the cytoplasm. The catalysed reaction is tRNA(Phe) + L-phenylalanine + ATP = L-phenylalanyl-tRNA(Phe) + AMP + diphosphate + H(+). This is Phenylalanine--tRNA ligase alpha subunit from Campylobacter jejuni subsp. jejuni serotype O:6 (strain 81116 / NCTC 11828).